Consider the following 347-residue polypeptide: MAKQTTLDEFNAVFPKLEEVLLDHARSYKLPQEQLDWYKKSLEANPLGGKCNRGMSVPDSVSLLLEKPLTEEQYFQAATLGWMTELLQAFFLVSDDIMDSSITRRGQPCWYRQEGVGMIAINDAFMLEMAIYTLLKKYFRTHPAYVDLIELFHETTFQTELGQLCDLLTAPEDNVNLDNFSLEKYSFIVIYKTAYYSFYLPVALALHQLNLATPSNLKQAEDILIPLGEYFQIQDDYLDNFGKPEHIGKIGTDIKDNKCSWLVNQALAVATPEQRKILEENYGRKDDAKELVVKKLYDDLKLEQLYLDYEEKVVGQIRERIANIDESGGLKKTVFEAFLAKIYKRSK.

Lys-50, Arg-53, and Gln-88 together coordinate isopentenyl diphosphate. Mg(2+)-binding residues include Asp-95 and Asp-99. Arg-104 is a binding site for dimethylallyl diphosphate. Arg-105 serves as a coordination point for isopentenyl diphosphate. Lys-192, Thr-193, Gln-232, Lys-249, and Lys-258 together coordinate dimethylallyl diphosphate.

The protein belongs to the FPP/GGPP synthase family. The cofactor is Mg(2+).

The catalysed reaction is isopentenyl diphosphate + dimethylallyl diphosphate = (2E)-geranyl diphosphate + diphosphate. It catalyses the reaction isopentenyl diphosphate + (2E)-geranyl diphosphate = (2E,6E)-farnesyl diphosphate + diphosphate. It functions in the pathway isoprenoid biosynthesis; farnesyl diphosphate biosynthesis; farnesyl diphosphate from geranyl diphosphate and isopentenyl diphosphate: step 1/1. It participates in isoprenoid biosynthesis; geranyl diphosphate biosynthesis; geranyl diphosphate from dimethylallyl diphosphate and isopentenyl diphosphate: step 1/1. Its function is as follows. Farnesyl pyrophosphate synthase; part of the second module of ergosterol biosynthesis pathway that includes the middle steps of the pathway. ERG20 catalyzes the sequential condensation of isopentenyl pyrophosphate with dimethylallyl pyrophosphate, and then with the resultant geranylpyrophosphate to the ultimate product farnesyl pyrophosphate. The second module is carried out in the vacuole and involves the formation of farnesyl diphosphate, which is also an important intermediate in the biosynthesis of ubiquinone, dolichol, heme and prenylated proteins. Activity by the mevalonate kinase ERG12 (FG05912) first converts mevalonate into 5-phosphomevalonate. 5-phosphomevalonate is then further converted to 5-diphosphomevalonate by the phosphomevalonate kinase ERG8 (FG09764). The diphosphomevalonate decarboxylase ERG19 (FG10424) then produces isopentenyl diphosphate. The isopentenyl-diphosphate delta-isomerase IDI1 (FG09722) then catalyzes the 1,3-allylic rearrangement of the homoallylic substrate isopentenyl (IPP) to its highly electrophilic allylic isomer, dimethylallyl diphosphate (DMAPP). Finally the farnesyl diphosphate synthase ERG20 (FG06784) catalyzes the sequential condensation of isopentenyl pyrophosphate with dimethylallyl pyrophosphate, and then with the resultant geranylpyrophosphate to the ultimate product farnesyl pyrophosphate. The polypeptide is Farnesyl pyrophosphate synthase ERG20 (Gibberella zeae (strain ATCC MYA-4620 / CBS 123657 / FGSC 9075 / NRRL 31084 / PH-1) (Wheat head blight fungus)).